The chain runs to 435 residues: uncharacterized protein (435 aa).

The region spanning 7-58 is the F-box domain; that stretch reads PFPITKLPLVPRCKILKFFDYGDLLDISLCSKRMAQTVRDIHITADLHYLTL.

This is an uncharacterized protein from Caenorhabditis elegans.